Reading from the N-terminus, the 2148-residue chain is Polyketide synthase 1 (2148 aa).

The tract at residues 19–261 (FIFGDQSSCN…TPLAVHAPYH (243 aa)) is N-terminal acylcarrier protein transacylase domain (SAT). Positions 394 to 829 (ESKIAIIGMS…GGNTALLVED (436 aa)) constitute a Ketosynthase family 3 (KS3) domain. Active-site for beta-ketoacyl synthase activity residues include Cys-566, His-701, and His-745. The interval 929-1233 (AFVFSGQGSQ…PSLMRNKDGW (305 aa)) is malonyl-CoA:ACP transacylase (MAT) domain. The For acyl/malonyl transferase activity role is filled by Ser-1018. The product template (PT) domain stretch occupies residues 1310–1624 (TASVHRIVHE…RKVLNTAMPP (315 aa)). The interval 1314-1447 (HRIVHESVEK…SSLHFEQPKV (134 aa)) is N-terminal hotdog fold. The region spanning 1314–1619 (HRIVHESVEK…FQGIPRKVLN (306 aa)) is the PKS/mFAS DH domain. The Proton acceptor; for dehydratase activity role is filled by His-1346. A C-terminal hotdog fold region spans residues 1474–1619 (LNSRMSSGVI…FQGIPRKVLN (146 aa)). Asp-1533 serves as the catalytic Proton donor; for dehydratase activity. Residues 1619–1655 (NTAMPPPKSQNEAPVRSGPAKPAVKPPRSASSEHSGH) form a disordered region. The region spanning 1678 to 1752 (RNPMLPVFKI…DLAAHLGMDT (75 aa)) is the Carrier 1 domain. The residue at position 1712 (Ser-1712) is an O-(pantetheine 4'-phosphoryl)serine. The span at 1755-1790 (ADQSSGQSSSSGGLSPRSDSIGEMTSSATTPPSMSP) shows a compositional bias: low complexity. Positions 1755 to 1796 (ADQSSGQSSSSGGLSPRSDSIGEMTSSATTPPSMSPRGSVSG) are disordered. Residues 1793-1870 (SVSGSQCKDV…SFKHMFQQGH (78 aa)) form the Carrier 2 domain. Ser-1830 carries the post-translational modification O-(pantetheine 4'-phosphoryl)serine. Residues 1882–2146 (LKQYRATSTL…ERVAAFIRSI (265 aa)) form a thioesterase (TE) domain region. The For thioesterase activity role is filled by Ser-1973.

Functionally, polyketide synthase; part of the Pks1 gene cluster that mediates the biosynthesis of an anthraquinone derivative pigment that contributes to conidial pigmentation that provides protection from UV radiation, heat and cold stress. The polyketide synthase Pks1 produces 1-acetyl-2,4,6,8-tetrahydroxy-9,10-anthraquinone though condensation of acetyl-CoA with malonyl-CoA. The dehydratase EthD and the laccase Mlac1 further convert the anthraquinone derivative into the final conidial pigment. The protein is Polyketide synthase 1 of Metarhizium brunneum (strain ARSEF 3297).